We begin with the raw amino-acid sequence, 232 residues long: MSEVITVKQTNMENIYECEFNDGSFRLCTRNLVPNFNVYGERLIKYEGVEYREWNAFRSKLAGAILKGLKTNPIRKGTKVLYLGAASGTTISHVSDIIELNGKAYGVEFSPRVVRELLLVAQRRPNIFPLLADARFPQSYKSVVENVDVLYVDIAQPDQTDIAIYNAKFFLKVNGDMLLVIKARSIDVTKDPKEIYKTEVEKLENSNFETIQIINLDPYDKDHAIVLSKYKG.

Residues 89–90, 108–109, 133–134, and 153–156 each bind S-adenosyl-L-methionine; these read TT, EF, DA, and DIAQ.

It belongs to the methyltransferase superfamily. Fibrillarin family. Interacts with nop5. Component of box C/D small ribonucleoprotein (sRNP) particles that contain rpl7ae, FlpA and nop5, plus a guide RNA. These sRNP particles form homodimers, giving rise to an asymmetric holoenzyme.

In terms of biological role, involved in pre-rRNA and tRNA processing. Utilizes the methyl donor S-adenosyl-L-methionine to catalyze the site-specific 2'-hydroxyl methylation of ribose moieties in rRNA and tRNA. Site specificity is provided by a guide RNA that base pairs with the substrate. Methylation occurs at a characteristic distance from the sequence involved in base pairing with the guide RNA. This chain is Fibrillarin-like rRNA/tRNA 2'-O-methyltransferase, found in Saccharolobus solfataricus (strain ATCC 35092 / DSM 1617 / JCM 11322 / P2) (Sulfolobus solfataricus).